Here is a 394-residue protein sequence, read N- to C-terminus: MSKEKFERTKPHVNVGTIGHVDHGKTTLTAAITTVLAKHYGGAARAFDQIDNAPEEKARGITINTSHVEYDTPTRHYAHVDCPGHADYVKNMITGAAQMDGAILVVAATDGPMPQTREHILLGRQVGVPYIIVFLNKCDMVDDEELLELVEMEVRELLSQYDFPGDDTPIVRGSALQALNGVAEWEEKILELANHLDTYIPEPQRAIDQPFLLPIEDVFSISGRGTVVTGRVERGIIRTGEEVEIVGIKATTKTTVTGVEMFRKLLDEGRAGENVGALLRGTKREEIERGQVLAKPGSITPHTDFESEVYVLSKEEGGRHTPFFKGYRPQFYFRTTDVTGTIELPEGVEMVMPGDNIKMTVSLIHPIAMDQGLRFAIREGGRTVGAGVVAKIIK.

In terms of domain architecture, tr-type G spans 10 to 204 (KPHVNVGTIG…HLDTYIPEPQ (195 aa)). The tract at residues 19–26 (GHVDHGKT) is G1. 19–26 (GHVDHGKT) serves as a coordination point for GTP. Residue T26 coordinates Mg(2+). The tract at residues 60-64 (GITIN) is G2. Positions 81–84 (DCPG) are G3. GTP contacts are provided by residues 81 to 85 (DCPGH) and 136 to 139 (NKCD). Positions 136 to 139 (NKCD) are G4. The tract at residues 174-176 (SAL) is G5.

It belongs to the TRAFAC class translation factor GTPase superfamily. Classic translation factor GTPase family. EF-Tu/EF-1A subfamily. As to quaternary structure, monomer.

It localises to the cytoplasm. It carries out the reaction GTP + H2O = GDP + phosphate + H(+). In terms of biological role, GTP hydrolase that promotes the GTP-dependent binding of aminoacyl-tRNA to the A-site of ribosomes during protein biosynthesis. The protein is Elongation factor Tu-A of Pasteurella multocida (strain Pm70).